The primary structure comprises 844 residues: Protein translocase subunit SecA (844 aa).

ATP contacts are provided by residues Q89, 107–111, and D497; that span reads GEGKT. 4 residues coordinate Zn(2+): C829, C831, C840, and H841.

Belongs to the SecA family. Monomer and homodimer. Part of the essential Sec protein translocation apparatus which comprises SecA, SecYEG and auxiliary proteins SecDF. Other proteins may also be involved. Requires Zn(2+) as cofactor.

It localises to the cell membrane. The protein resides in the cytoplasm. The catalysed reaction is ATP + H2O + cellular proteinSide 1 = ADP + phosphate + cellular proteinSide 2.. Part of the Sec protein translocase complex. Interacts with the SecYEG preprotein conducting channel. Has a central role in coupling the hydrolysis of ATP to the transfer of proteins into and across the cell membrane, serving as an ATP-driven molecular motor driving the stepwise translocation of polypeptide chains across the membrane. In Streptococcus suis (strain 98HAH33), this protein is Protein translocase subunit SecA.